The following is a 563-amino-acid chain: Arginine--tRNA ligase (563 aa).

Positions proline 123–histidine 133 match the 'HIGH' region motif.

The protein belongs to the class-I aminoacyl-tRNA synthetase family. Monomer.

Its subcellular location is the cytoplasm. The catalysed reaction is tRNA(Arg) + L-arginine + ATP = L-arginyl-tRNA(Arg) + AMP + diphosphate. The sequence is that of Arginine--tRNA ligase (argS) from Chlamydia trachomatis serovar D (strain ATCC VR-885 / DSM 19411 / UW-3/Cx).